The following is a 343-amino-acid chain: Dihydroorotase (343 aa).

Zn(2+) contacts are provided by histidine 13 and histidine 15. Substrate contacts are provided by residues 15 to 17 (HLR) and asparagine 41. Residues lysine 99, histidine 136, and histidine 174 each coordinate Zn(2+). At lysine 99 the chain carries N6-carboxylysine. Histidine 136 lines the substrate pocket. Leucine 219 is a substrate binding site. Residue aspartate 247 coordinates Zn(2+). The active site involves aspartate 247. Substrate is bound by residues histidine 251 and alanine 263.

Belongs to the metallo-dependent hydrolases superfamily. DHOase family. Class II DHOase subfamily. In terms of assembly, homodimer. It depends on Zn(2+) as a cofactor.

It catalyses the reaction (S)-dihydroorotate + H2O = N-carbamoyl-L-aspartate + H(+). Its pathway is pyrimidine metabolism; UMP biosynthesis via de novo pathway; (S)-dihydroorotate from bicarbonate: step 3/3. Functionally, catalyzes the reversible cyclization of carbamoyl aspartate to dihydroorotate. This is Dihydroorotase from Shewanella putrefaciens (strain CN-32 / ATCC BAA-453).